Reading from the N-terminus, the 439-residue chain is MEMHLLCETMFTCRKNNILPVHLCILLDDVIHKEKVKAIEGIFFQCVFFKEKLVYTEWTKIKFTYVLHDLVISQIFKNACIKEVIHGALILSVPINIDNLHFDTDILILKIIYPHFLHDDIVIKLSEILSGAPRMQKTVEKKQEVEKPFFHIPAKLGDLTKEDPISFNHHGPLEPPSTVRGLKQSANVRHSHPISRPEKANVTFLSDSWYSQNLKCDFISDIQQRHVLVIFWYELSKGIQMQIKNIQIPPENLFSSITNYLDRVNTYLDEIAERTFRCITTNMEIQNRHLPQKFNSHFQIEFNCTHLISGMELARDFWILSLDRNSCVLKAMASHFLHKKKGRSSLSSNEFWADLIDCTTGKTLYGEKVRWQLNSETSLYSTFRKNQNISWELQPNCYALYMSENLKLYWVLPGGFCVSGTFKLKENDEFFFDWQFGMS.

The protein belongs to the herpesviridae CVC1 protein family. In terms of assembly, interacts (via C-terminus) with capsid vertex component 2/CVC2.

It localises to the virion. The protein resides in the host nucleus. Its function is as follows. Capsid vertex-specific component that plays a role during viral DNA encapsidation, assuring correct genome cleavage and presumably stabilizing capsids that contain full-length viral genomes. The chain is Capsid vertex component 1 from Homo sapiens (Human).